The following is a 445-amino-acid chain: Na(+)-translocating NADH-quinone reductase subunit A (445 aa).

The protein belongs to the NqrA family. In terms of assembly, composed of six subunits; NqrA, NqrB, NqrC, NqrD, NqrE and NqrF.

It carries out the reaction a ubiquinone + n Na(+)(in) + NADH + H(+) = a ubiquinol + n Na(+)(out) + NAD(+). In terms of biological role, NQR complex catalyzes the reduction of ubiquinone-1 to ubiquinol by two successive reactions, coupled with the transport of Na(+) ions from the cytoplasm to the periplasm. NqrA to NqrE are probably involved in the second step, the conversion of ubisemiquinone to ubiquinol. The polypeptide is Na(+)-translocating NADH-quinone reductase subunit A (Pseudomonas aeruginosa (strain ATCC 15692 / DSM 22644 / CIP 104116 / JCM 14847 / LMG 12228 / 1C / PRS 101 / PAO1)).